Here is a 576-residue protein sequence, read N- to C-terminus: Homeobox protein invected (576 aa).

Disordered stretches follow at residues 1 to 68 (MSTL…DEQT), 80 to 102 (EVEE…NSVL), 305 to 344 (GGSV…LAQS), 364 to 410 (NSND…GEDS), and 426 to 476 (SDRP…RPRT). Over residues 80–91 (EVEEEHDLDLED) the composition is skewed to acidic residues. 3 stretches are compositionally biased toward low complexity: residues 309-325 (SGSS…TNGN), 364-381 (NSND…TNTS), and 395-405 (AGAGATGASGK). Gly residues predominate over residues 450–468 (AGGGGGGVEKGEAADGGGV). Positions 471-530 (DKRPRTAFSGTQLARLKHEFNENRYLTEKRRQQLSGELGLNEAQIKIWFQNKRAKLKKSS) form a DNA-binding region, homeobox.

This sequence belongs to the engrailed homeobox family. Expressed in row 6/7 of the embryonic neuroectoderm.

It is found in the nucleus. Functionally, engrailed (en) and invected (inv) are functionally redundant transcription factors in neuronal precursor cell NB5-3 specification. Inv is unable to substitute for en in other regulatory processes such as maintaining gsb expression in the neuroectoderm after stage 10 of embryogenesis. Maintenance of gsb expression in row 5 of the neuroectoderm involves an as yet unidentified short range signaling molecule. The protein is Homeobox protein invected (inv) of Drosophila melanogaster (Fruit fly).